Here is a 220-residue protein sequence, read N- to C-terminus: Membrane steroid-binding protein 1 (220 aa).

Residues 22–42 traverse the membrane as a helical segment; the sequence is VVFFTALALAFAIYQVISGWF. Residues 74–171 enclose the Cytochrome b5 heme-binding domain; that stretch reads EITEEELKQY…SKYAKVGTVK (98 aa). The tract at residues 74 to 171 is steroid-binding; it reads EITEEELKQY…SKYAKVGTVK (98 aa). Residues 174–220 are disordered; sequence GSEPETASVSEPTENVEQDAHVTTTPGKTVVDKSDDAPAETVLKKEE. The span at 178–200 shows a compositional bias: polar residues; sequence ETASVSEPTENVEQDAHVTTTPG. The segment covering 203 to 220 has biased composition (basic and acidic residues); the sequence is VVDKSDDAPAETVLKKEE.

The protein belongs to the cytochrome b5 family. MAPR subfamily. As to quaternary structure, interacts with BAK1 (via extracellular region). As to expression, expressed in cotyledons, stems, roots, leaves, flower and silique stalks, pistils and stigmas, but not in anthers.

Its subcellular location is the cell membrane. The protein resides in the endosome membrane. MSBP1 can bind to multiple steroid compounds with different affinities. Negatively regulates cell elongation and brassinosteroid signaling. May act as a coreceptor with BAK1 and enhances its endocytosis. The polypeptide is Membrane steroid-binding protein 1 (MSBP1) (Arabidopsis thaliana (Mouse-ear cress)).